The primary structure comprises 359 residues: Peptide chain release factor 1 (359 aa).

Gln-234 bears the N5-methylglutamine mark. Residues 283–305 (SQKDAARAADRRAQVGSGDRSER) are disordered.

This sequence belongs to the prokaryotic/mitochondrial release factor family. In terms of processing, methylated by PrmC. Methylation increases the termination efficiency of RF1.

It is found in the cytoplasm. Its function is as follows. Peptide chain release factor 1 directs the termination of translation in response to the peptide chain termination codons UAG and UAA. This Methylobacterium sp. (strain 4-46) protein is Peptide chain release factor 1.